Here is a 297-residue protein sequence, read N- to C-terminus: Formylmethanofuran--tetrahydromethanopterin formyltransferase (297 aa).

It belongs to the FTR family. In terms of assembly, homotetramer.

Its subcellular location is the cytoplasm. The enzyme catalyses N-formylmethanofuran + 5,6,7,8-tetrahydromethanopterin + H(+) = N(5)-formyl-5,6,7,8-tetrahydromethanopterin + methanofuran. Its pathway is one-carbon metabolism; methanogenesis from CO(2); 5,10-methenyl-5,6,7,8-tetrahydromethanopterin from CO(2): step 2/3. Catalyzes the reversible transfer of a formyl group from formylmethanofuran (formyl-MFR) to tetrahydromethanopterin (H(4)MPT) to produce 5-formyl tetrahydromethanopterin (5-formyl-H(4)MPT) and methanofuran (MFR). This chain is Formylmethanofuran--tetrahydromethanopterin formyltransferase, found in Methanothermobacter thermautotrophicus (strain ATCC 29096 / DSM 1053 / JCM 10044 / NBRC 100330 / Delta H) (Methanobacterium thermoautotrophicum).